Reading from the N-terminus, the 372-residue chain is DNA-directed RNA polymerase subunit alpha (372 aa).

The tract at residues Met-1 to Asp-268 is alpha N-terminal domain (alpha-NTD). Residues Lys-280–Glu-372 form an alpha C-terminal domain (alpha-CTD) region.

Belongs to the RNA polymerase alpha chain family. As to quaternary structure, homodimer. The RNAP catalytic core consists of 2 alpha, 1 beta, 1 beta' and 1 omega subunit. When a sigma factor is associated with the core the holoenzyme is formed, which can initiate transcription.

It carries out the reaction RNA(n) + a ribonucleoside 5'-triphosphate = RNA(n+1) + diphosphate. Functionally, DNA-dependent RNA polymerase catalyzes the transcription of DNA into RNA using the four ribonucleoside triphosphates as substrates. The sequence is that of DNA-directed RNA polymerase subunit alpha from Ehrlichia canis (strain Jake).